Here is a 306-residue protein sequence, read N- to C-terminus: Large ribosomal subunit protein uL18 (306 aa).

This sequence belongs to the universal ribosomal protein uL18 family. In terms of assembly, component of the large ribosomal subunit (LSU).

The protein localises to the cytoplasm. It localises to the nucleus. In terms of biological role, component of the ribosome, a large ribonucleoprotein complex responsible for the synthesis of proteins in the cell. The small ribosomal subunit (SSU) binds messenger RNAs (mRNAs) and translates the encoded message by selecting cognate aminoacyl-transfer RNA (tRNA) molecules. The large subunit (LSU) contains the ribosomal catalytic site termed the peptidyl transferase center (PTC), which catalyzes the formation of peptide bonds, thereby polymerizing the amino acids delivered by tRNAs into a polypeptide chain. The nascent polypeptides leave the ribosome through a tunnel in the LSU and interact with protein factors that function in enzymatic processing, targeting, and the membrane insertion of nascent chains at the exit of the ribosomal tunnel. The chain is Large ribosomal subunit protein uL18 (RPL5) from Theileria annulata.